Reading from the N-terminus, the 489-residue chain is UDP-N-acetylmuramoyl-L-alanyl-D-glutamate--2,6-diaminopimelate ligase (489 aa).

Residue serine 32 participates in UDP-N-acetyl-alpha-D-muramoyl-L-alanyl-D-glutamate binding. 113 to 119 (GTNGKTT) is a binding site for ATP. Residues 154–155 (TT), serine 181, glutamine 187, and arginine 189 contribute to the UDP-N-acetyl-alpha-D-muramoyl-L-alanyl-D-glutamate site. Position 221 is an N6-carboxylysine (lysine 221). Meso-2,6-diaminopimelate is bound by residues arginine 381, 405–408 (DNPR), glycine 456, and glutamate 460. The Meso-diaminopimelate recognition motif motif lies at 405-408 (DNPR).

It belongs to the MurCDEF family. MurE subfamily. Requires Mg(2+) as cofactor. Carboxylation is probably crucial for Mg(2+) binding and, consequently, for the gamma-phosphate positioning of ATP.

Its subcellular location is the cytoplasm. It carries out the reaction UDP-N-acetyl-alpha-D-muramoyl-L-alanyl-D-glutamate + meso-2,6-diaminopimelate + ATP = UDP-N-acetyl-alpha-D-muramoyl-L-alanyl-gamma-D-glutamyl-meso-2,6-diaminopimelate + ADP + phosphate + H(+). The protein operates within cell wall biogenesis; peptidoglycan biosynthesis. Catalyzes the addition of meso-diaminopimelic acid to the nucleotide precursor UDP-N-acetylmuramoyl-L-alanyl-D-glutamate (UMAG) in the biosynthesis of bacterial cell-wall peptidoglycan. This Gloeobacter violaceus (strain ATCC 29082 / PCC 7421) protein is UDP-N-acetylmuramoyl-L-alanyl-D-glutamate--2,6-diaminopimelate ligase.